A 230-amino-acid chain; its full sequence is Transmembrane ascorbate ferrireductase 2 (230 aa).

The next 2 helical transmembrane spans lie at 5–25 (VLGG…IAAL) and 50–70 (VHPV…MLAY). A Cytochrome b561 domain is found at 14-218 (VVRVLGFIIA…LGGFVILGVV (205 aa)). Heme b is bound at residue His51. Residues Lys77 and Lys81 each contribute to the L-ascorbate site. The helical transmembrane segment at 82–102 (LVHLTLQLTAFILSLIGVWAA) threads the bilayer. Residue His84 participates in heme b binding. Positions 105, 106, and 115 each coordinate monodehydro-L-ascorbate radical. A heme b-binding site is contributed by His118. Residues 120-140 (WLGLACLFLFAFQWAAGFVTY) traverse the membrane as a helical segment. 3 residues coordinate L-ascorbate: Tyr140, Arg150, and Ala151. His157 contacts heme b. The chain crosses the membrane as a helical span at residues 157 to 177 (HVFLGISIYALALVTATTGIL). Monodehydro-L-ascorbate radical-binding residues include Phe182 and Asn186. The chain crosses the membrane as a helical span at residues 198–218 (LVNTMGVLILILGGFVILGVV).

In terms of assembly, homodimer. It depends on heme b as a cofactor. In terms of tissue distribution, expressed in roots, seedlings, leaves and flowers. Expressed in the L1 layer of the shoot apex, in the epidermis of leaf primordia and young leaves and in vascular bundles. In the differentiation zone of the root, detected in the pericycle and in the epidermis, but not in the cortex. Strongly expressed in the cortical region of the root tip, in the meristematic tissue and in the epidermal cell layer of lateral roots, but not in the root caps. Highly expressed in unfertilized ovules. In mature embryos, expressed in the epidermis, cotyledon tips and root tips.

It is found in the membrane. The catalysed reaction is Fe(3+)(out) + L-ascorbate(in) = monodehydro-L-ascorbate radical(in) + Fe(2+)(out) + H(+). Its function is as follows. Two-heme-containing cytochrome. Catalyzes ascorbate-dependent transmembrane ferric-chelate reduction. The polypeptide is Transmembrane ascorbate ferrireductase 2 (CYB561B) (Arabidopsis thaliana (Mouse-ear cress)).